The sequence spans 204 residues: Probable nicotinate-nucleotide adenylyltransferase (204 aa).

Belongs to the NadD family.

It carries out the reaction nicotinate beta-D-ribonucleotide + ATP + H(+) = deamido-NAD(+) + diphosphate. It functions in the pathway cofactor biosynthesis; NAD(+) biosynthesis; deamido-NAD(+) from nicotinate D-ribonucleotide: step 1/1. Its function is as follows. Catalyzes the reversible adenylation of nicotinate mononucleotide (NaMN) to nicotinic acid adenine dinucleotide (NaAD). The protein is Probable nicotinate-nucleotide adenylyltransferase of Methylacidiphilum infernorum (isolate V4) (Methylokorus infernorum (strain V4)).